Consider the following 50-residue polypeptide: Protein hunchback (50 aa).

C2H2-type zinc fingers lie at residues 1 to 5 (HIRNH), 11 to 33 (FKCN…LKSH), and 39 to 50 (YRCADCAYATKY).

Belongs to the hunchback C2H2-type zinc-finger protein family.

It is found in the nucleus. Its function is as follows. Gap class segmentation protein that controls development of head structures. This Schultesia lampyridiformis (Firefly mimic roach) protein is Protein hunchback (hb).